The following is an 880-amino-acid chain: Probable receptor-like protein kinase At5g38990 (880 aa).

The first 21 residues, 1–21, serve as a signal peptide directing secretion; sequence MICHVLVIFTILVSAVVDATA. Over 22–440 the chain is Extracellular; that stretch reads SYEPTDVFLI…GKGKSSHVLP (419 aa). Residues Asn-46, Asn-136, Asn-158, Asn-210, Asn-256, Asn-263, Asn-297, and Asn-324 are each glycosylated (N-linked (GlcNAc...) asparagine). The chain crosses the membrane as a helical span at residues 441–461; the sequence is IIIAVVGSAVALAFFVLVVVL. Residues 462–880 lie on the Cytoplasmic side of the membrane; it reads VVMKRKKKSN…FSEINEPKAR (419 aa). Residues 471–505 are disordered; the sequence is NESSVDTTNKPSTNSSWGPLLHGTGSTNTKSASSL. Composition is skewed to polar residues over residues 472 to 487 and 494 to 505; these read ESSV…NSSW and TGSTNTKSASSL. A Protein kinase domain is found at 525–810; the sequence is FEEKLIIGVG…EFALQLHETA (286 aa). ATP-binding positions include 531-539 and Lys-554; that span reads IGVGGFGSV. Asp-653 serves as the catalytic Proton acceptor. Residues 820–846 form a disordered region; the sequence is LDLMPSGEVGTTTDGEDDLFSRTTGHV.

It belongs to the protein kinase superfamily. Ser/Thr protein kinase family.

It localises to the membrane. The polypeptide is Probable receptor-like protein kinase At5g38990 (Arabidopsis thaliana (Mouse-ear cress)).